The following is a 459-amino-acid chain: Ribulose bisphosphate carboxylase large chain (459 aa).

K4 carries the post-translational modification N6,N6,N6-trimethyllysine. Residues N113 and T163 each coordinate substrate. K165 acts as the Proton acceptor in catalysis. K167 contacts substrate. The Mg(2+) site is built by K191, D193, and E194. K191 is subject to N6-carboxylysine. H284 acts as the Proton acceptor in catalysis. Substrate-binding residues include R285, H317, and S369.

It belongs to the RuBisCO large chain family. Type I subfamily. In terms of assembly, heterohexadecamer of 8 large chains and 8 small chains; disulfide-linked. The disulfide link is formed within the large subunit homodimers. It depends on Mg(2+) as a cofactor. The disulfide bond which can form in the large chain dimeric partners within the hexadecamer appears to be associated with oxidative stress and protein turnover.

The protein localises to the plastid. It localises to the chloroplast. It catalyses the reaction 2 (2R)-3-phosphoglycerate + 2 H(+) = D-ribulose 1,5-bisphosphate + CO2 + H2O. The catalysed reaction is D-ribulose 1,5-bisphosphate + O2 = 2-phosphoglycolate + (2R)-3-phosphoglycerate + 2 H(+). Its function is as follows. RuBisCO catalyzes two reactions: the carboxylation of D-ribulose 1,5-bisphosphate, the primary event in carbon dioxide fixation, as well as the oxidative fragmentation of the pentose substrate in the photorespiration process. Both reactions occur simultaneously and in competition at the same active site. The polypeptide is Ribulose bisphosphate carboxylase large chain (Ceratopetalum gummiferum (New South Wales Christmas bush)).